We begin with the raw amino-acid sequence, 161 residues long: Ribonuclease P protein component 2 (161 aa).

The protein belongs to the eukaryotic/archaeal RNase P protein component 2 family. In terms of assembly, consists of a catalytic RNA component and at least 4-5 protein subunits.

The protein resides in the cytoplasm. It catalyses the reaction Endonucleolytic cleavage of RNA, removing 5'-extranucleotides from tRNA precursor.. Its function is as follows. Part of ribonuclease P, a protein complex that generates mature tRNA molecules by cleaving their 5'-ends. In Haloarcula marismortui (strain ATCC 43049 / DSM 3752 / JCM 8966 / VKM B-1809) (Halobacterium marismortui), this protein is Ribonuclease P protein component 2.